Consider the following 491-residue polypeptide: Probable glycine dehydrogenase (decarboxylating) subunit 2 (491 aa).

Lys273 carries the post-translational modification N6-(pyridoxal phosphate)lysine.

The protein belongs to the GcvP family. C-terminal subunit subfamily. As to quaternary structure, the glycine cleavage system is composed of four proteins: P, T, L and H. In this organism, the P 'protein' is a heterodimer of two subunits. Pyridoxal 5'-phosphate serves as cofactor.

The catalysed reaction is N(6)-[(R)-lipoyl]-L-lysyl-[glycine-cleavage complex H protein] + glycine + H(+) = N(6)-[(R)-S(8)-aminomethyldihydrolipoyl]-L-lysyl-[glycine-cleavage complex H protein] + CO2. The glycine cleavage system catalyzes the degradation of glycine. The P protein binds the alpha-amino group of glycine through its pyridoxal phosphate cofactor; CO(2) is released and the remaining methylamine moiety is then transferred to the lipoamide cofactor of the H protein. The chain is Probable glycine dehydrogenase (decarboxylating) subunit 2 from Bacillus anthracis (strain A0248).